Reading from the N-terminus, the 215-residue chain is N-(5'-phosphoribosyl)anthranilate isomerase (215 aa).

Belongs to the TrpF family.

It catalyses the reaction N-(5-phospho-beta-D-ribosyl)anthranilate = 1-(2-carboxyphenylamino)-1-deoxy-D-ribulose 5-phosphate. Its pathway is amino-acid biosynthesis; L-tryptophan biosynthesis; L-tryptophan from chorismate: step 3/5. In Aeropyrum pernix (strain ATCC 700893 / DSM 11879 / JCM 9820 / NBRC 100138 / K1), this protein is N-(5'-phosphoribosyl)anthranilate isomerase (trpF).